Consider the following 190-residue polypeptide: UPF0301 protein PSPPH_0476 (190 aa).

Belongs to the UPF0301 (AlgH) family.

The sequence is that of UPF0301 protein PSPPH_0476 from Pseudomonas savastanoi pv. phaseolicola (strain 1448A / Race 6) (Pseudomonas syringae pv. phaseolicola (strain 1448A / Race 6)).